Reading from the N-terminus, the 258-residue chain is Coiled-coil domain-containing protein 107 (258 aa).

The first 24 residues, 1-24 (MASVVSLAGTLGLLLVSALPEVLG), serve as a signal peptide directing secretion. Positions 25–35 (DRRSPDRRAHP) are enriched in basic and acidic residues. The interval 25–63 (DRRSPDRRAHPGDAGQVGPAAAEPRRQSPPSKNQRERAR) is disordered. The helical transmembrane segment at 66–86 (ALPLGALYTAAAVAFVLYKCL) threads the bilayer. Residues 106–134 (LQSEQHLAQLTQQLVQTEQHLNSLMAQLD) are a coiled coil. Residues 203–222 (EPLNWNTGTRNLTPPREMQP) are disordered.

It is found in the membrane. This is Coiled-coil domain-containing protein 107 (CCDC107) from Bos taurus (Bovine).